The following is a 136-amino-acid chain: 1,4-dihydroxy-2-naphthoyl-CoA hydrolase (136 aa).

Asp16 is a catalytic residue.

Belongs to the 4-hydroxybenzoyl-CoA thioesterase family. DHNA-CoA hydrolase subfamily.

The enzyme catalyses 1,4-dihydroxy-2-naphthoyl-CoA + H2O = 1,4-dihydroxy-2-naphthoate + CoA + H(+). It participates in cofactor biosynthesis; phylloquinone biosynthesis. It functions in the pathway quinol/quinone metabolism; 1,4-dihydroxy-2-naphthoate biosynthesis; 1,4-dihydroxy-2-naphthoate from chorismate: step 7/7. Its function is as follows. Catalyzes the hydrolysis of 1,4-dihydroxy-2-naphthoyl-CoA (DHNA-CoA) to 1,4-dihydroxy-2-naphthoate (DHNA), a reaction involved in phylloquinone (vitamin K1) biosynthesis. This chain is 1,4-dihydroxy-2-naphthoyl-CoA hydrolase, found in Synechococcus sp. (strain ATCC 27144 / PCC 6301 / SAUG 1402/1) (Anacystis nidulans).